Here is a 183-residue protein sequence, read N- to C-terminus: Neuroblastoma suppressor of tumorigenicity 1 (183 aa).

The signal sequence occupies residues Met-1–Ala-19. 5 disulfide bridges follow: Cys-38–Cys-88, Cys-52–Cys-102, Cys-62–Cys-121, Cys-66–Cys-123, and Cys-85–Cys-126. The 90-residue stretch at Cys-38–Ser-127 folds into the CTCK domain. The interval Ala-145–Asp-170 is disordered.

Belongs to the DAN family.

It localises to the secreted. Its function is as follows. May act as a tumor suppressor. The protein is Neuroblastoma suppressor of tumorigenicity 1 (nbl1) of Danio rerio (Zebrafish).